The primary structure comprises 503 residues: ATP synthase subunit beta (503 aa).

157–164 provides a ligand contact to ATP; it reads GGAGVGKT.

The protein belongs to the ATPase alpha/beta chains family. In terms of assembly, F-type ATPases have 2 components, CF(1) - the catalytic core - and CF(0) - the membrane proton channel. CF(1) has five subunits: alpha(3), beta(3), gamma(1), delta(1), epsilon(1). CF(0) has three main subunits: a(1), b(2) and c(9-12). The alpha and beta chains form an alternating ring which encloses part of the gamma chain. CF(1) is attached to CF(0) by a central stalk formed by the gamma and epsilon chains, while a peripheral stalk is formed by the delta and b chains.

It is found in the cell inner membrane. The enzyme catalyses ATP + H2O + 4 H(+)(in) = ADP + phosphate + 5 H(+)(out). In terms of biological role, produces ATP from ADP in the presence of a proton gradient across the membrane. The catalytic sites are hosted primarily by the beta subunits. The polypeptide is ATP synthase subunit beta (Flavobacterium johnsoniae (strain ATCC 17061 / DSM 2064 / JCM 8514 / BCRC 14874 / CCUG 350202 / NBRC 14942 / NCIMB 11054 / UW101) (Cytophaga johnsonae)).